The primary structure comprises 95 residues: Aspartyl/glutamyl-tRNA(Asn/Gln) amidotransferase subunit C (95 aa).

Belongs to the GatC family. In terms of assembly, heterotrimer of A, B and C subunits.

It catalyses the reaction L-glutamyl-tRNA(Gln) + L-glutamine + ATP + H2O = L-glutaminyl-tRNA(Gln) + L-glutamate + ADP + phosphate + H(+). The catalysed reaction is L-aspartyl-tRNA(Asn) + L-glutamine + ATP + H2O = L-asparaginyl-tRNA(Asn) + L-glutamate + ADP + phosphate + 2 H(+). In terms of biological role, allows the formation of correctly charged Asn-tRNA(Asn) or Gln-tRNA(Gln) through the transamidation of misacylated Asp-tRNA(Asn) or Glu-tRNA(Gln) in organisms which lack either or both of asparaginyl-tRNA or glutaminyl-tRNA synthetases. The reaction takes place in the presence of glutamine and ATP through an activated phospho-Asp-tRNA(Asn) or phospho-Glu-tRNA(Gln). In Geobacter metallireducens (strain ATCC 53774 / DSM 7210 / GS-15), this protein is Aspartyl/glutamyl-tRNA(Asn/Gln) amidotransferase subunit C.